Reading from the N-terminus, the 332-residue chain is DNA-directed RNA polymerase subunit alpha (332 aa).

The tract at residues T2–T234 is alpha N-terminal domain (alpha-NTD). Residues V248–G332 are alpha C-terminal domain (alpha-CTD).

The protein belongs to the RNA polymerase alpha chain family. Homodimer. The RNAP catalytic core consists of 2 alpha, 1 beta, 1 beta' and 1 omega subunit. When a sigma factor is associated with the core the holoenzyme is formed, which can initiate transcription.

The catalysed reaction is RNA(n) + a ribonucleoside 5'-triphosphate = RNA(n+1) + diphosphate. DNA-dependent RNA polymerase catalyzes the transcription of DNA into RNA using the four ribonucleoside triphosphates as substrates. The sequence is that of DNA-directed RNA polymerase subunit alpha from Xanthomonas axonopodis pv. citri (strain 306).